The following is a 302-amino-acid chain: Glycine--tRNA ligase alpha subunit (302 aa).

This sequence belongs to the class-II aminoacyl-tRNA synthetase family. Tetramer of two alpha and two beta subunits.

Its subcellular location is the cytoplasm. It carries out the reaction tRNA(Gly) + glycine + ATP = glycyl-tRNA(Gly) + AMP + diphosphate. This Xanthomonas oryzae pv. oryzae (strain MAFF 311018) protein is Glycine--tRNA ligase alpha subunit.